A 565-amino-acid polypeptide reads, in one-letter code: MSHEFDYIIIGAGSAGNVLATRLTEDADVSVLLLEAGGPDYRLDFRTQMPAALAFPLQGRRYNWAYETDPEPHMNNRRMECGRGKGLGGSSLINGMCYIRGNALDFDNWAKAKGLEDWTYHDCLPYFRKAESRDIGPNDYHGGDGPVSVTTPKAGNNPLFHAMVEAGVQAGYPRTDDLNGYQQEGFGPMDRTVTPQGRRASTARGYLDQARERPNLTIVTHATTDRILFDGKRASGVSYLIGNANDATEARARREVLLCAGAIASPQILQRSGVGPAALLRELDIALVHELPGVGQNLQDHLEMYLQYACTQPVSLYPALKLLNQPGIGAQWLFTGNGIGASNQFEAGGFIRTRPEFAWPNIQFHFLPVAINYNGSNAVNEHGFQAHVGSMRSPSRGRIQLKSKDPRQHPSILFNYMSHEQDWQEFRDAIRITREIMAQPALDSYRGREISPGIDCQSDAELDAFIREHAETAFHPSCSCKMGEDDMAVVDGQGRVHGVQGLRVVDASIMPEIITGNLNATTIMMAEKIADRIRDRQPLPRSNAPYFVAGERPVRGQPQRAVSAA.

An FAD-binding site is contributed by 6–35 (DYIIIGAGSAGNVLATRLTEDADVSVLLLE). Residue His-475 is the Proton acceptor of the active site. The tract at residues 541-565 (RSNAPYFVAGERPVRGQPQRAVSAA) is disordered.

It belongs to the GMC oxidoreductase family. The cofactor is FAD.

The catalysed reaction is choline + A = betaine aldehyde + AH2. It carries out the reaction betaine aldehyde + NAD(+) + H2O = glycine betaine + NADH + 2 H(+). The protein operates within amine and polyamine biosynthesis; betaine biosynthesis via choline pathway; betaine aldehyde from choline (cytochrome c reductase route): step 1/1. Its function is as follows. Involved in the biosynthesis of the osmoprotectant glycine betaine. Catalyzes the oxidation of choline to betaine aldehyde and betaine aldehyde to glycine betaine at the same rate. The sequence is that of Oxygen-dependent choline dehydrogenase from Ectopseudomonas mendocina (strain ymp) (Pseudomonas mendocina).